The chain runs to 444 residues: Ribosomal protein uS12 methylthiotransferase RimO (444 aa).

Positions 6–116 constitute an MTTase N-terminal domain; sequence PNIGFVSLGC…VMEHVHKYVP (111 aa). Residues Cys15, Cys51, Cys80, Cys148, Cys152, and Cys155 each contribute to the [4Fe-4S] cluster site. In terms of domain architecture, Radical SAM core spans 134-375; it reads LTPKHYAYLK…MQLQQEISAA (242 aa). The 67-residue stretch at 378–444 folds into the TRAM domain; sequence QQKIGKTWKV…ADEYDLWGTC (67 aa).

The protein belongs to the methylthiotransferase family. RimO subfamily. Requires [4Fe-4S] cluster as cofactor.

The protein resides in the cytoplasm. The enzyme catalyses L-aspartate(89)-[ribosomal protein uS12]-hydrogen + (sulfur carrier)-SH + AH2 + 2 S-adenosyl-L-methionine = 3-methylsulfanyl-L-aspartate(89)-[ribosomal protein uS12]-hydrogen + (sulfur carrier)-H + 5'-deoxyadenosine + L-methionine + A + S-adenosyl-L-homocysteine + 2 H(+). In terms of biological role, catalyzes the methylthiolation of an aspartic acid residue of ribosomal protein uS12. This chain is Ribosomal protein uS12 methylthiotransferase RimO, found in Actinobacillus succinogenes (strain ATCC 55618 / DSM 22257 / CCUG 43843 / 130Z).